The following is a 200-amino-acid chain: Peptidyl-tRNA hydrolase (200 aa).

Residue tyrosine 17 coordinates tRNA. Residue histidine 22 is the Proton acceptor of the active site. Positions 78, 80, and 126 each coordinate tRNA.

Belongs to the PTH family. Monomer.

The protein localises to the cytoplasm. The catalysed reaction is an N-acyl-L-alpha-aminoacyl-tRNA + H2O = an N-acyl-L-amino acid + a tRNA + H(+). Hydrolyzes ribosome-free peptidyl-tRNAs (with 1 or more amino acids incorporated), which drop off the ribosome during protein synthesis, or as a result of ribosome stalling. Functionally, catalyzes the release of premature peptidyl moieties from peptidyl-tRNA molecules trapped in stalled 50S ribosomal subunits, and thus maintains levels of free tRNAs and 50S ribosomes. This is Peptidyl-tRNA hydrolase from Cutibacterium acnes (strain DSM 16379 / KPA171202) (Propionibacterium acnes).